Consider the following 99-residue polypeptide: (4S)-4-hydroxy-5-phosphonooxypentane-2,3-dione isomerase (99 aa).

The 90-residue stretch at 2–91 (HVTLVEINVK…ISEPRKKRSF (90 aa)) folds into the ABM domain.

The protein belongs to the LsrG family. As to quaternary structure, homodimer.

Its subcellular location is the cytoplasm. The enzyme catalyses (2S)-2-hydroxy-3,4-dioxopentyl phosphate = 3-hydroxy-2,4-dioxopentyl phosphate. Its function is as follows. Involved in the degradation of phospho-AI-2, thereby terminating induction of the lsr operon and closing the AI-2 signaling cycle. Catalyzes the conversion of (4S)-4-hydroxy-5-phosphonooxypentane-2,3-dione (P-DPD) to 3-hydroxy-5-phosphonooxypentane-2,4-dione (P-HPD). The sequence is that of (4S)-4-hydroxy-5-phosphonooxypentane-2,3-dione isomerase from Photorhabdus laumondii subsp. laumondii (strain DSM 15139 / CIP 105565 / TT01) (Photorhabdus luminescens subsp. laumondii).